The primary structure comprises 568 residues: MKILVASAWPYVQSVPHLGNLIGSILSADVFARYARLKYGKENVVFVSGSDEHGTPIEIEAIKRGVSPKSLTDQAHEYDRQLFLNTWNISFDNYTRTESEVHKSFVKEFLLGVSKYIKVEEEELPYCERDKLFLPDRFVKGTCPYCGFEDARGDQCDRCGRLLTPSLLINPKCAICGTPPVLRKTKHWFFDLRPFSEPIREWITSSQDMPENVKGTALSWVNEGLKPRSLTRDNSWGIPAPFPGAEGKTIYVWFEALLGYLSATLEYFQGRGETERWKEFWENGKVRSYYFIGKDNIPFHAVILPAMLLASEKNYALPTVIAATEYLMYEGQKFSKSRKIGIWIDEAPLIMEVDYWRFLLIRMRPEEKDMNFTWTEAIRIVNSELNDDVGNLVNRVITMVNRYFQGKIPEPKNLKEVDMRLLSRVGETLDQVSFMFEKGKLKGGTELVLTLARETNAYLNEKAPWDKVKSDVEDASNTLFVASSAIRAIALMLYPVIPEKAKLIYDQLGLDITQERWDNAKEPLKPGHVVGKPAPVFKKLPQDFEKNLNEILEKVRKEVEKRRPTLLK.

Residues 10–20 carry the 'HIGH' region motif; sequence PYVQSVPHLGN. Residues C143, C146, C156, and C159 each coordinate Zn(2+). The 'KMSKS' region motif lies at 333–337; that stretch reads KFSKS. K336 contacts ATP.

Belongs to the class-I aminoacyl-tRNA synthetase family. MetG type 1 subfamily. Zn(2+) is required as a cofactor.

The protein localises to the cytoplasm. The catalysed reaction is tRNA(Met) + L-methionine + ATP = L-methionyl-tRNA(Met) + AMP + diphosphate. Its function is as follows. Is required not only for elongation of protein synthesis but also for the initiation of all mRNA translation through initiator tRNA(fMet) aminoacylation. The chain is Methionine--tRNA ligase from Metallosphaera sedula (strain ATCC 51363 / DSM 5348 / JCM 9185 / NBRC 15509 / TH2).